A 349-amino-acid chain; its full sequence is Probable formaldehyde dehydrogenase AdhA (349 aa).

Zn(2+)-binding residues include Cys44, His66, Cys97, Cys100, Cys103, Cys111, and Cys161.

It belongs to the zinc-containing alcohol dehydrogenase family. Zn(2+) serves as cofactor.

Its function is as follows. Functions in the protection against aldehyde-stress. This chain is Probable formaldehyde dehydrogenase AdhA (adhA), found in Bacillus subtilis (strain 168).